A 157-amino-acid chain; its full sequence is S-ribosylhomocysteine lyase (157 aa).

Positions 54, 58, and 124 each coordinate Fe cation.

It belongs to the LuxS family. As to quaternary structure, homodimer. The cofactor is Fe cation.

It carries out the reaction S-(5-deoxy-D-ribos-5-yl)-L-homocysteine = (S)-4,5-dihydroxypentane-2,3-dione + L-homocysteine. Involved in the synthesis of autoinducer 2 (AI-2) which is secreted by bacteria and is used to communicate both the cell density and the metabolic potential of the environment. The regulation of gene expression in response to changes in cell density is called quorum sensing. Catalyzes the transformation of S-ribosylhomocysteine (RHC) to homocysteine (HC) and 4,5-dihydroxy-2,3-pentadione (DPD). The polypeptide is S-ribosylhomocysteine lyase (Pediococcus pentosaceus (strain ATCC 25745 / CCUG 21536 / LMG 10740 / 183-1w)).